The primary structure comprises 89 residues: Small ribosomal subunit protein uS17 (89 aa).

Belongs to the universal ribosomal protein uS17 family. In terms of assembly, part of the 30S ribosomal subunit.

One of the primary rRNA binding proteins, it binds specifically to the 5'-end of 16S ribosomal RNA. In Ralstonia nicotianae (strain ATCC BAA-1114 / GMI1000) (Ralstonia solanacearum), this protein is Small ribosomal subunit protein uS17.